The chain runs to 227 residues: Ribonuclease HII (227 aa).

An RNase H type-2 domain is found at methionine 1 to lysine 210. A divalent metal cation is bound by residues aspartate 7, glutamate 8, and aspartate 105.

It belongs to the RNase HII family. It depends on Mn(2+) as a cofactor. The cofactor is Mg(2+).

It is found in the cytoplasm. It catalyses the reaction Endonucleolytic cleavage to 5'-phosphomonoester.. Functionally, endonuclease that specifically degrades the RNA of RNA-DNA hybrids. The chain is Ribonuclease HII from Thermococcus onnurineus (strain NA1).